A 734-amino-acid polypeptide reads, in one-letter code: Ribosomal RNA large subunit methyltransferase K/L (734 aa).

One can recognise a THUMP domain in the interval 49–167 (HAYRICMWSR…KTEHTYCLDL (119 aa)).

It belongs to the methyltransferase superfamily. RlmKL family.

Its subcellular location is the cytoplasm. It catalyses the reaction guanosine(2445) in 23S rRNA + S-adenosyl-L-methionine = N(2)-methylguanosine(2445) in 23S rRNA + S-adenosyl-L-homocysteine + H(+). The catalysed reaction is guanosine(2069) in 23S rRNA + S-adenosyl-L-methionine = N(2)-methylguanosine(2069) in 23S rRNA + S-adenosyl-L-homocysteine + H(+). Functionally, specifically methylates the guanine in position 2445 (m2G2445) and the guanine in position 2069 (m7G2069) of 23S rRNA. The protein is Ribosomal RNA large subunit methyltransferase K/L of Acinetobacter baumannii (strain AYE).